The sequence spans 694 residues: Junctophilin-2 (694 aa).

Over M1–T672 the chain is Cytoplasmic. MORN repeat units follow at residues Y14–G36, Y38–T59, F60–R79, Y82–A104, Y106–T128, and Y129–M151. Phosphoserine occurs at positions 162 and 165. Disordered stretches follow at residues S164–S192 and R231–F278. Positions A176 to A189 are enriched in low complexity. Polar residues predominate over residues R235–R244. Positions S250 to E267 are enriched in low complexity. MORN repeat units follow at residues Y290–R312 and Y313–R335. Residues K350–K364 carry the Bipartite nuclear localization signal motif. Phosphoserine is present on residues S445, S447, and S466. Residues L448 to E663 are disordered. Basic and acidic residues predominate over residues P467–R476. A Phosphothreonine modification is found at T474. Over residues E478–P491 the composition is skewed to pro residues. S483 is modified (phosphoserine). T487 carries the post-translational modification Phosphothreonine. A Nuclear localization signal motif is present at residues K492–P496. Low complexity predominate over residues S522–P540. Phosphoserine is present on residues S536, S542, S596, and S600. A compositionally biased stretch (low complexity) spans P589–A610. A helical; Anchor for type IV membrane protein transmembrane segment spans residues V673 to L693.

Belongs to the junctophilin family. Interacts with TRPC3. Interacts with BAG5 and HSPA8; the interaction with HSPA8 is increased in the presence of BAG5. Junctophilin-2 N-terminal fragment: Interacts with MEF2C. Post-translationally, proteolytically cleaved by calpain in response to cardiac stress. The major cleavage site takes place at the C-terminus and leads to the release of the Junctophilin-2 N-terminal fragment chain (JP2NT). In terms of processing, phosphorylation on Ser-165, probably by PKC, affects RYR1-mediated calcium ion release, interaction with TRPC3, and skeletal muscle myotubule development.

The protein localises to the cell membrane. It is found in the sarcoplasmic reticulum membrane. Its subcellular location is the endoplasmic reticulum membrane. It localises to the nucleus. Functionally, membrane-binding protein that provides a structural bridge between the plasma membrane and the sarcoplasmic reticulum and is required for normal excitation-contraction coupling in cardiomyocytes. Provides a structural foundation for functional cross-talk between the cell surface and intracellular Ca(2+) release channels by maintaining the 12-15 nm gap between the sarcolemma and the sarcoplasmic reticulum membranes in the cardiac dyads. Necessary for proper intracellular Ca(2+) signaling in cardiac myocytes via its involvement in ryanodine receptor-mediated calcium ion release. Contributes to the construction of skeletal muscle triad junctions. Transcription repressor required to safeguard against the deleterious effects of cardiac stress. Generated following cleavage of the Junctophilin-2 chain by calpain in response to cardiac stress in cardiomyocytes. Following cleavage and release from the membrane, translocates to the nucleus, binds DNA and represses expression of genes implicated in cell growth and differentiation, hypertrophy, inflammation and fibrosis. Modifies the transcription profile and thereby attenuates pathological remodeling in response to cardiac stress. Probably acts by competing with MEF2 transcription factors and TATA-binding proteins. The protein is Junctophilin-2 (JPH2) of Oryctolagus cuniculus (Rabbit).